A 384-amino-acid polypeptide reads, in one-letter code: MSFKNRGDYNFTPRNVVSRNSVFFMCLASFCLGMFFTNRMWNIVPEARGISRLSKLSLSSSDCDKKNVLDYGNNTIGILDKSISNLEMKLVAARAERESLSGKFNISNEAKKRKYFMVIGINTAFSSRKRRDSVRSTWMPQGENLKKLEEEKGIIVRFVIGHSVLSHGILDKAIEAEEKTHGDFLRLEHTEGYMKLSAKTKTFFATAVSLWDAEFYIKVDDDVHVNLASLKKALSAHQNKPRVYVGCMKSGPVLARKSVKYHEPEYWKFGEVGNKYFRHATGQFYAISKDLATYILINQDLLHKYANEDVSLGSWFIGLNVEHVDEKRLCCSTSQDCELKAMMGHVCAASFDWKCSGICRSAERMADVHERCGEPQNALWTSNS.

A helical; Signal-anchor for type II membrane protein transmembrane segment spans residues 21–43 (SVFFMCLASFCLGMFFTNRMWNI). Asparagine 73 and asparagine 105 each carry an N-linked (GlcNAc...) asparagine glycan.

The protein belongs to the glycosyltransferase 31 family. Mn(2+) is required as a cofactor.

It localises to the golgi apparatus membrane. It functions in the pathway protein modification; protein glycosylation. Functionally, beta-1,3-galactosyltransferase that transfers galactose from UDP-galactose to substrates with a terminal glycosyl residue. The chain is Probable beta-1,3-galactosyltransferase 1 (B3GALT1) from Arabidopsis thaliana (Mouse-ear cress).